A 279-amino-acid polypeptide reads, in one-letter code: Tryptophan synthase alpha chain (279 aa).

Residues Glu50 and Asp61 each act as proton acceptor in the active site.

It belongs to the TrpA family. As to quaternary structure, tetramer of two alpha and two beta chains.

The enzyme catalyses (1S,2R)-1-C-(indol-3-yl)glycerol 3-phosphate + L-serine = D-glyceraldehyde 3-phosphate + L-tryptophan + H2O. Its pathway is amino-acid biosynthesis; L-tryptophan biosynthesis; L-tryptophan from chorismate: step 5/5. Its function is as follows. The alpha subunit is responsible for the aldol cleavage of indoleglycerol phosphate to indole and glyceraldehyde 3-phosphate. This Azorhizobium caulinodans (strain ATCC 43989 / DSM 5975 / JCM 20966 / LMG 6465 / NBRC 14845 / NCIMB 13405 / ORS 571) protein is Tryptophan synthase alpha chain.